The chain runs to 594 residues: Spermidine/putrescine import ATP-binding protein PotA (594 aa).

The 412-residue stretch at 24-435 folds into the ABC transporter domain; that stretch reads IEIKKINKTY…PANNWVANFI (412 aa). ATP is bound at residue 57–64; it reads GPSGCGKT. The insert stretch occupies residues 125 to 304; it reads RKPIENVSAD…EWFDKKKLTR (180 aa).

The protein belongs to the ABC transporter superfamily. Spermidine/putrescine importer (TC 3.A.1.11.1) family. In terms of assembly, the complex is composed of two ATP-binding proteins (PotA), two transmembrane proteins (PotB and PotC) and a solute-binding protein (PotD).

The protein localises to the cell membrane. The catalysed reaction is ATP + H2O + polyamine-[polyamine-binding protein]Side 1 = ADP + phosphate + polyamineSide 2 + [polyamine-binding protein]Side 1.. Part of the ABC transporter complex PotABCD involved in spermidine/putrescine import. Responsible for energy coupling to the transport system. This Malacoplasma penetrans (strain HF-2) (Mycoplasma penetrans) protein is Spermidine/putrescine import ATP-binding protein PotA.